A 191-amino-acid polypeptide reads, in one-letter code: Large ribosomal subunit protein bL9c (191 aa).

The N-terminal 35 residues, 1 to 35 (MASPSCASTLPWTAAAFSYPRRLQTRRAPSLVIVA), are a transit peptide targeting the chloroplast.

The protein belongs to the bacterial ribosomal protein bL9 family. In terms of assembly, part of the 50S ribosomal subunit.

The protein localises to the plastid. Its subcellular location is the chloroplast. Functionally, binds to the 23S rRNA. In Triticum aestivum (Wheat), this protein is Large ribosomal subunit protein bL9c (RPL9).